A 183-amino-acid polypeptide reads, in one-letter code: Apo-citrate lyase phosphoribosyl-dephospho-CoA transferase (183 aa).

This sequence belongs to the CitX family.

The catalysed reaction is apo-[citrate lyase ACP] + 2'-(5''-triphospho-alpha-D-ribosyl)-3'-dephospho-CoA = holo-[citrate lyase ACP] + diphosphate. In terms of biological role, transfers 2-(5''-triphosphoribosyl)-3'-dephosphocoenzyme-A on a serine residue to the apo-acyl carrier protein (gamma chain) of the citrate lyase to yield holo-acyl carrier protein. The sequence is that of Apo-citrate lyase phosphoribosyl-dephospho-CoA transferase from Escherichia coli O7:K1 (strain IAI39 / ExPEC).